The chain runs to 490 residues: Keratin, type II cytoskeletal 8 (490 aa).

Polar residues predominate over residues 1 to 27 (MSIRVTQKSYKMSTSGPRAFSSRSFTS). A disordered region spans residues 1-48 (MSIRVTQKSYKMSTSGPRAFSSRSFTSGPGARISSSSFSRVGSSSSSF). Residues 1–96 (MSIRVTQKSY…DPNIQAVRTQ (96 aa)) are head. Serine 9 carries the phosphoserine; by PKC/PRKCE modification. Residue lysine 11 forms a Glycyl lysine isopeptide (Lys-Gly) (interchain with G-Cter in SUMO2) linkage. 4 positions are modified to phosphoserine: serine 13, serine 15, serine 21, and serine 22. Arginine 23 is modified (omega-N-methylarginine). The residue at position 24 (serine 24) is a Phosphoserine; by PKC/PRKCE. Position 26 is a phosphothreonine (threonine 26). At serine 27 the chain carries Phosphoserine. Arginine 32 is subject to Omega-N-methylarginine. Residues serine 34, serine 37, and serine 39 each carry the phosphoserine modification. Residues 34–48 (SSSSFSRVGSSSSSF) are compositionally biased toward low complexity. Arginine 40 carries the omega-N-methylarginine modification. 3 positions are modified to phosphoserine: serine 43, serine 44, and serine 47. Asymmetric dimethylarginine; alternate is present on arginine 49. Arginine 49 carries the post-translational modification Omega-N-methylarginine; alternate. Serine 51 is modified (phosphoserine). Position 80 is a phosphoserine; by MAPK (serine 80). The coil 1A stretch occupies residues 97-132 (EKEQIKSLNNKFASFIDKVRFLEQQNKMLETKWSLL). The region spanning 97-408 (EKEQIKSLNN…KLLEGEESRL (312 aa)) is the IF rod domain. Lysine 107 bears the N6-malonyllysine mark. Residues lysine 128 and lysine 136 each participate in a glycyl lysine isopeptide (Lys-Gly) (interchain with G-Cter in SUMO2) cross-link. Residues 133–149 (QQQKTSRSNMDNMFESY) are linker 1. Residues 150–241 (INNLRRQLEA…QIHEEEIREL (92 aa)) are coil 1B. A Glycyl lysine isopeptide (Lys-Gly) (interchain with G-Cter in SUMO1); alternate cross-link involves residue lysine 203. Residue lysine 203 forms a Glycyl lysine isopeptide (Lys-Gly) (interchain with G-Cter in SUMO2); alternate linkage. Lysine 213 bears the N6-acetyllysine mark. The interval 242 to 265 (QSQISDTSVVLSMDNSRSLDMDGI) is linker 12. Phosphoserine occurs at positions 259 and 280. Residues 266-403 (IAEVRAQYED…ITTYRKLLEG (138 aa)) are coil 2. The interval 267–387 (AEVRAQYEDI…REYQELMNVK (121 aa)) is necessary for interaction with PNN. Lysine 291 is covalently cross-linked (Glycyl lysine isopeptide (Lys-Gly) (interchain with G-Cter in SUMO2)). Residue lysine 301 forms a Glycyl lysine isopeptide (Lys-Gly) (interchain with G-Cter in SUMO2); alternate linkage. Lysine 301 is modified (N6-acetyllysine; alternate). A Glycyl lysine isopeptide (Lys-Gly) (interchain with G-Cter in SUMO2) cross-link involves residue lysine 310. Residue lysine 331 forms a Glycyl lysine isopeptide (Lys-Gly) (interchain with G-Cter in SUMO2); alternate linkage. N6-acetyllysine; alternate is present on lysine 331. The residue at position 336 (serine 336) is a Phosphoserine. Residue lysine 399 forms a Glycyl lysine isopeptide (Lys-Gly) (interchain with G-Cter in SUMO2) linkage. Residues 404-490 (EESRLESGMQ…VSESSDVVSK (87 aa)) are tail. Residues serine 406, serine 410, serine 416, serine 423, serine 430, serine 432, and serine 438 each carry the phosphoserine modification. A Glycyl lysine isopeptide (Lys-Gly) (interchain with G-Cter in SUMO1); alternate cross-link involves residue lysine 479. A Glycyl lysine isopeptide (Lys-Gly) (interchain with G-Cter in SUMO2); alternate cross-link involves residue lysine 479. Phosphoserine is present on residues serine 482, serine 484, serine 485, and serine 489.

This sequence belongs to the intermediate filament family. Heterotetramer of two type I and two type II keratins. Forms a heterodimer with KRT18. Associates with KRT20. Interacts with PLEC isoform 1C, when in a heterodimer with KRT18. Interacts with PNN. When associated with KRT19, interacts with DMD. Interacts with TCHP. Interacts with APEX1. Interacts with GPER1. Interacts with EPPK1. Interacts with PKP1 and PKP2. Phosphorylation on serine residues is enhanced during EGF stimulation and mitosis. Ser-80 phosphorylation plays an important role in keratin filament reorganization. In terms of processing, O-glycosylated. O-GlcNAcylation at multiple sites increases solubility, and decreases stability by inducing proteasomal degradation. Post-translationally, O-glycosylated (O-GlcNAcylated), in a cell cycle-dependent manner. In terms of tissue distribution, expressed in abundance in the epithelia of colon, bladder, ileum, and stomach, with lower expression observed in earskin (at protein level). Also expressed in pancreas, liver, dudenum and jejunum.

Its subcellular location is the cytoplasm. The protein resides in the nucleus. It localises to the nucleoplasm. The protein localises to the nucleus matrix. Together with KRT19, helps to link the contractile apparatus to dystrophin at the costameres of striated muscle. This chain is Keratin, type II cytoskeletal 8 (Krt8), found in Mus musculus (Mouse).